A 248-amino-acid chain; its full sequence is 5'-nucleotidase SurE (248 aa).

D8, D9, S39, and N92 together coordinate a divalent metal cation.

This sequence belongs to the SurE nucleotidase family. Requires a divalent metal cation as cofactor.

The protein resides in the cytoplasm. The catalysed reaction is a ribonucleoside 5'-phosphate + H2O = a ribonucleoside + phosphate. Functionally, nucleotidase that shows phosphatase activity on nucleoside 5'-monophosphates. This chain is 5'-nucleotidase SurE, found in Tolumonas auensis (strain DSM 9187 / NBRC 110442 / TA 4).